Consider the following 176-residue polypeptide: F(420)H(2) dehydrogenase subunit J (176 aa).

The next 5 helical transmembrane spans lie at 13–33 (TAVF…VVIA), 39–59 (AGLA…LLNA), 64–84 (VIQV…AVML), 99–119 (PLAF…AFGT), and 140–160 (IGML…IVLL).

This sequence belongs to the complex I subunit 6 family. As to quaternary structure, the FPO complex is composed of at least 13 different subunits. FpoA, FpoH, FpoJ, FpoK, FpoL, FpoM and FpoN proteins constitute the membrane sector of the complex.

It is found in the cell membrane. It carries out the reaction methanophenazine + reduced coenzyme F420-(gamma-L-Glu)(n) = dihydromethanophenazine + oxidized coenzyme F420-(gamma-L-Glu)(n) + H(+). Component of the F(420)H(2) dehydrogenase (FPO complex) which is part of the energy-conserving F(420)H(2):heterodisulfide oxidoreductase system. The membrane-bound electron transfer system of the complex plays an important role in the metabolism of methylotrophic methanogens when the organisms grow on methanol or methylamines. Catalyzes the oxidation of methanophenazine to dihydromethanophenazine. It shuttles electrons from F(420)H(2), via FAD and iron-sulfur (Fe-S) centers, to methanophenazine (an electron carrier in the membrane). It couples the redox reaction to proton translocation (for every two electrons transferred, two hydrogen ions are translocated across the cytoplasmic membrane), and thus conserves the redox energy in a proton gradient. It also catalyzes the oxidation of F(420)H(2) with quinones such as 2,3-dimethyl-1,4-naphthoquinone, 2-methyl-1,4-naphthoquinone and tetramethyl-p-benzoquinone. The chain is F(420)H(2) dehydrogenase subunit J (fpoJ) from Methanosarcina mazei (strain ATCC BAA-159 / DSM 3647 / Goe1 / Go1 / JCM 11833 / OCM 88) (Methanosarcina frisia).